The chain runs to 98 residues: NADH-ubiquinone oxidoreductase chain 4L (98 aa).

3 helical membrane passes run 1–21 (MPLI…GMLV), 29–49 (SLLC…LMTL), and 58–78 (IVPI…LALL).

This sequence belongs to the complex I subunit 4L family. In terms of assembly, core subunit of respiratory chain NADH dehydrogenase (Complex I) which is composed of 45 different subunits.

It is found in the mitochondrion inner membrane. It catalyses the reaction a ubiquinone + NADH + 5 H(+)(in) = a ubiquinol + NAD(+) + 4 H(+)(out). Its function is as follows. Core subunit of the mitochondrial membrane respiratory chain NADH dehydrogenase (Complex I) which catalyzes electron transfer from NADH through the respiratory chain, using ubiquinone as an electron acceptor. Part of the enzyme membrane arm which is embedded in the lipid bilayer and involved in proton translocation. In Pan paniscus (Pygmy chimpanzee), this protein is NADH-ubiquinone oxidoreductase chain 4L (MT-ND4L).